The chain runs to 308 residues: Phenylcoumaran benzylic ether reductase PT1 (308 aa).

Residues 11–17 (GATGYIG), Arg-36, and Lys-46 contribute to the NADP(+) site. The active-site Proton acceptor is Lys-134. Residue Arg-138 coordinates NADP(+).

Belongs to the NmrA-type oxidoreductase family. Isoflavone reductase subfamily.

The enzyme catalyses (-)-dehydrodiconiferyl alcohol + NADPH + H(+) = (S)-isodihydrodehydrodiconiferyl alcohol + NADP(+). The catalysed reaction is (+)-dehydrodiconiferyl alcohol + NADPH + H(+) = (R)-isodihydrodehydrodiconiferyl alcohol + NADP(+). It catalyses the reaction (2R,3S)-dihydrodehydrodiconiferyl alcohol + NADPH + H(+) = (S)-tetrahydrodehydrodiconiferyl alcohol + NADP(+). It carries out the reaction (2S,3R)-dihydrodehydrodiconiferyl alcohol + NADPH + H(+) = (R)-tetrahydrodehydrodiconiferyl alcohol + NADP(+). Its function is as follows. Oxidoreductase involved in lignan biosynthesis. Catalyzes the NADPH-dependent reduction of phenylcoumaran benzylic ethers. Converts dehydrodiconiferyl alcohol (DDC) to isodihydrodehydrodiconiferyl alcohol (IDDDC), and dihydrodehydrodiconiferyl alcohol (DDDC) to tetrahydrodehydrodiconiferyl alcohol (TDDC). In Pinus taeda (Loblolly pine), this protein is Phenylcoumaran benzylic ether reductase PT1.